The sequence spans 688 residues: Glycine--tRNA ligase beta subunit (688 aa).

This sequence belongs to the class-II aminoacyl-tRNA synthetase family. As to quaternary structure, tetramer of two alpha and two beta subunits.

Its subcellular location is the cytoplasm. The enzyme catalyses tRNA(Gly) + glycine + ATP = glycyl-tRNA(Gly) + AMP + diphosphate. The protein is Glycine--tRNA ligase beta subunit of Syntrophomonas wolfei subsp. wolfei (strain DSM 2245B / Goettingen).